The following is a 145-amino-acid chain: Large ribosomal subunit protein uL15 (145 aa).

Residues 1–52 (MRLNTLSPAAGSKRVKHRPGRGIGSGLGKTGGRGVKGQTSRSGGGKVRNGFE) are disordered. Gly residues-rich tracts occupy residues 21-35 (RGIG…GRGV) and 42-52 (SGGGKVRNGFE).

This sequence belongs to the universal ribosomal protein uL15 family. Part of the 50S ribosomal subunit.

Its function is as follows. Binds to the 23S rRNA. This chain is Large ribosomal subunit protein uL15, found in Aeromonas hydrophila subsp. hydrophila (strain ATCC 7966 / DSM 30187 / BCRC 13018 / CCUG 14551 / JCM 1027 / KCTC 2358 / NCIMB 9240 / NCTC 8049).